Consider the following 230-residue polypeptide: Cytochrome b6-f complex iron-sulfur subunit, chloroplastic (230 aa).

Over residues 1–16 (MASTTLSATPTPSQLS) the composition is skewed to low complexity. The segment at 1 to 20 (MASTTLSATPTPSQLSAAKN) is disordered. A chloroplast-targeting transit peptide spans 1–56 (MASTTLSATPTPSQLSAAKNGAYSPSRALLGKTARGLYPEKEMVSRKVTCQATSIP). Residues 73-93 (LLGALSLPTAGMLIPYGAFFV) traverse the membrane as a helical segment. Residues 116–212 (AAAWLKTHGP…CDISEEGKVV (97 aa)) form the Rieske domain. Positions 158, 160, 176, and 179 each coordinate [2Fe-2S] cluster. C163 and C178 are joined by a disulfide.

Belongs to the Rieske iron-sulfur protein family. The 4 large subunits of the cytochrome b6-f complex are cytochrome b6, subunit IV (17 kDa polypeptide, petD), cytochrome f and the Rieske protein, while the 4 small subunits are petG, petL, petM and petN. The complex functions as a dimer. [2Fe-2S] cluster is required as a cofactor.

It is found in the plastid. Its subcellular location is the chloroplast thylakoid membrane. The catalysed reaction is 2 oxidized [plastocyanin] + a plastoquinol + 2 H(+)(in) = 2 reduced [plastocyanin] + a plastoquinone + 4 H(+)(out). In terms of biological role, component of the cytochrome b6-f complex, which mediates electron transfer between photosystem II (PSII) and photosystem I (PSI), cyclic electron flow around PSI, and state transitions. The chain is Cytochrome b6-f complex iron-sulfur subunit, chloroplastic (petC) from Fritillaria agrestis (Stinkbells).